A 272-amino-acid polypeptide reads, in one-letter code: Bis(5'-nucleosyl)-tetraphosphatase, symmetrical (272 aa).

Belongs to the Ap4A hydrolase family.

The catalysed reaction is P(1),P(4)-bis(5'-adenosyl) tetraphosphate + H2O = 2 ADP + 2 H(+). Hydrolyzes diadenosine 5',5'''-P1,P4-tetraphosphate to yield ADP. The sequence is that of Bis(5'-nucleosyl)-tetraphosphatase, symmetrical from Glaesserella parasuis serovar 5 (strain SH0165) (Haemophilus parasuis).